Reading from the N-terminus, the 89-residue chain is MALLQQRKQEIISGYQTHETDTGSADVQVAMLTERINKLSTHLQANSKDHSSRRGLLQMIGRRKRLLAYILKHNPERYRALITRLGIRG.

The protein belongs to the universal ribosomal protein uS15 family. Part of the 30S ribosomal subunit. Forms a bridge to the 50S subunit in the 70S ribosome, contacting the 23S rRNA.

Functionally, one of the primary rRNA binding proteins, it binds directly to 16S rRNA where it helps nucleate assembly of the platform of the 30S subunit by binding and bridging several RNA helices of the 16S rRNA. Its function is as follows. Forms an intersubunit bridge (bridge B4) with the 23S rRNA of the 50S subunit in the ribosome. In Cyanothece sp. (strain PCC 7425 / ATCC 29141), this protein is Small ribosomal subunit protein uS15.